A 296-amino-acid chain; its full sequence is Endochitinase 3 (296 aa).

Residues 12–296 form the GH18 domain; the sequence is HKLTVYWGAE…VKNGQLPEED (285 aa). 2 N-linked (GlcNAc...) asparagine glycosylation sites follow: Asn32 and Asn152. The active-site Proton donor is the Glu153. Asn228 carries N-linked (GlcNAc...) asparagine glycosylation.

This sequence belongs to the glycosyl hydrolase 18 family. Chitinase class III subfamily.

It is found in the secreted. It catalyses the reaction Random endo-hydrolysis of N-acetyl-beta-D-glucosaminide (1-&gt;4)-beta-linkages in chitin and chitodextrins.. In terms of biological role, secreted chitinase involved in the degradation of chitin, a component of the cell walls of fungi and exoskeletal elements of some animals (including worms and arthropods). Participates in the infection process and directly acts in the penetration process of the host cuticle. Involved in heat-shock adaptation. The polypeptide is Endochitinase 3 (chi3) (Metarhizium anisopliae (Entomophthora anisopliae)).